The sequence spans 129 residues: Small ribosomal subunit protein uS12 (129 aa).

At Asp89 the chain carries 3-methylthioaspartic acid.

It belongs to the universal ribosomal protein uS12 family. Part of the 30S ribosomal subunit. Contacts proteins S8 and S17. May interact with IF1 in the 30S initiation complex.

In terms of biological role, with S4 and S5 plays an important role in translational accuracy. Functionally, interacts with and stabilizes bases of the 16S rRNA that are involved in tRNA selection in the A site and with the mRNA backbone. Located at the interface of the 30S and 50S subunits, it traverses the body of the 30S subunit contacting proteins on the other side and probably holding the rRNA structure together. The combined cluster of proteins S8, S12 and S17 appears to hold together the shoulder and platform of the 30S subunit. This is Small ribosomal subunit protein uS12 from Helicobacter hepaticus (strain ATCC 51449 / 3B1).